A 291-amino-acid chain; its full sequence is Probable peptide ABC transporter permease protein y4tQ (291 aa).

A run of 5 helical transmembrane segments spans residues Leu28–Leu48, Leu92–Ile112, Leu137–Ile157, Ala213–Val233, and Leu249–Val269. Residues Ala88–Gly276 enclose the ABC transmembrane type-1 domain.

The protein belongs to the binding-protein-dependent transport system permease family. OppBC subfamily.

The protein resides in the cell inner membrane. Functionally, probably part of the binding-protein-dependent transport system y4tOPQRS for a peptide. Probably responsible for the translocation of the substrate across the membrane. This is Probable peptide ABC transporter permease protein y4tQ from Sinorhizobium fredii (strain NBRC 101917 / NGR234).